A 481-amino-acid polypeptide reads, in one-letter code: GDP-fucose protein O-fucosyltransferase 2 (481 aa).

Residues 1-22 form the signal peptide; it reads MKGRAHIWVALLLACLPPRFRN. GDP-beta-L-fucose is bound by residues 59-63, 287-289, Asp365, and 382-383; these read GEGFN, HLR, and RF. Glu60 (proton acceptor) is an active-site residue.

This sequence belongs to the glycosyltransferase 68 family.

It localises to the endoplasmic reticulum. The enzyme catalyses L-seryl-[protein] + GDP-beta-L-fucose = 3-O-(alpha-L-fucosyl)-L-seryl-[protein] + GDP + H(+). It carries out the reaction L-threonyl-[protein] + GDP-beta-L-fucose = 3-O-(alpha-L-fucosyl)-L-threonyl-[protein] + GDP + H(+). It functions in the pathway protein modification; protein glycosylation. Its function is as follows. Catalyzes the reaction that attaches fucose through an O-glycosidic linkage to a conserved serine or threonine residue in the consensus sequence C1-X-X-S/T-C2 of thrombospondin type I repeats (TSRs) where C1 and C2 are the first and second cysteines of the repeat, respectively. O-fucosylates sporozoite proteins CSP and TRAP. O-fucosylation regulates stability and intracellular trafficking of TRAP but not of CSP. Probably by regulating protein O-fucosylation, may play a role in parasite transmission to the mosquito vector and/or infection of the vertebrate host hepatocytes; however, POFUT2 involvement in transmission/infection is controversial. The sequence is that of GDP-fucose protein O-fucosyltransferase 2 from Plasmodium vivax (strain Salvador I).